Here is a 160-residue protein sequence, read N- to C-terminus: Large ribosomal subunit protein uL22c (160 aa).

This sequence belongs to the universal ribosomal protein uL22 family. Part of the 50S ribosomal subunit.

Its subcellular location is the plastid. The protein resides in the chloroplast. Functionally, this protein binds specifically to 23S rRNA. Its function is as follows. The globular domain of the protein is located near the polypeptide exit tunnel on the outside of the subunit, while an extended beta-hairpin is found that lines the wall of the exit tunnel in the center of the 70S ribosome. The protein is Large ribosomal subunit protein uL22c (rpl22) of Arabidopsis thaliana (Mouse-ear cress).